Reading from the N-terminus, the 216-residue chain is Transmembrane emp24 domain-containing protein eca (216 aa).

Positions 1–20 are cleaved as a signal peptide; sequence MRDQFISLALILCVLHSACG. Residues 21 to 182 lie on the Lumenal side of the membrane; the sequence is LYFHISETER…FRHTSESTNS (162 aa). Positions 30-126 constitute a GOLD domain; sequence RKCFIEEVPD…QLRVHLDIQV (97 aa). Positions 134-164 form a coiled coil; it reads ANVAQKEKLTELQLRIRQLLDQVEQITKEQN. A helical membrane pass occupies residues 183–203; the sequence is RVLWWSLAQTVVLVCMGFWQM. Over 204–216 the chain is Cytoplasmic; it reads RHLKSFFEAKKLV. A Prevents secretion from ER motif is present at residues 213–216; that stretch reads KKLV.

It belongs to the EMP24/GP25L family.

Its subcellular location is the endoplasmic reticulum membrane. Its function is as follows. Eca and bai are essential, though not redundant, for dorsoventral patterning of the embryo. Specifically required during early embryogenesis for the activity of maternal tkv, while the zygotic tkv is not affected. Involved in Golgi organization. The polypeptide is Transmembrane emp24 domain-containing protein eca (Drosophila simulans (Fruit fly)).